Here is a 287-residue protein sequence, read N- to C-terminus: Nucleotide-binding protein HEAR2885 (287 aa).

8–15 (GISGSGKS) provides a ligand contact to ATP. 57-60 (DVRS) lines the GTP pocket.

The protein belongs to the RapZ-like family.

In terms of biological role, displays ATPase and GTPase activities. The chain is Nucleotide-binding protein HEAR2885 from Herminiimonas arsenicoxydans.